The primary structure comprises 418 residues: Gamma-glutamyl phosphate reductase (418 aa).

It belongs to the gamma-glutamyl phosphate reductase family.

Its subcellular location is the cytoplasm. It carries out the reaction L-glutamate 5-semialdehyde + phosphate + NADP(+) = L-glutamyl 5-phosphate + NADPH + H(+). Its pathway is amino-acid biosynthesis; L-proline biosynthesis; L-glutamate 5-semialdehyde from L-glutamate: step 2/2. Functionally, catalyzes the NADPH-dependent reduction of L-glutamate 5-phosphate into L-glutamate 5-semialdehyde and phosphate. The product spontaneously undergoes cyclization to form 1-pyrroline-5-carboxylate. The chain is Gamma-glutamyl phosphate reductase from Geobacter sulfurreducens (strain ATCC 51573 / DSM 12127 / PCA).